The sequence spans 395 residues: Elongation factor Tu (395 aa).

One can recognise a tr-type G domain in the interval 10 to 204 (KEHANIGTIG…AVDDYIPTPE (195 aa)). The interval 19–26 (GHVDHGKT) is G1. Residue 19–26 (GHVDHGKT) coordinates GTP. Threonine 26 is a binding site for Mg(2+). The tract at residues 60–64 (GITIN) is G2. The interval 81 to 84 (DCPG) is G3. GTP contacts are provided by residues 81-85 (DCPGH) and 136-139 (NKAD). The tract at residues 136 to 139 (NKAD) is G4. Positions 174-176 (SAL) are G5.

This sequence belongs to the TRAFAC class translation factor GTPase superfamily. Classic translation factor GTPase family. EF-Tu/EF-1A subfamily. As to quaternary structure, monomer.

The protein localises to the cytoplasm. The enzyme catalyses GTP + H2O = GDP + phosphate + H(+). GTP hydrolase that promotes the GTP-dependent binding of aminoacyl-tRNA to the A-site of ribosomes during protein biosynthesis. The sequence is that of Elongation factor Tu from Staphylococcus carnosus (strain TM300).